Here is a 384-residue protein sequence, read N- to C-terminus: Transcription factor iacI (384 aa).

It localises to the nucleus. Functionally, transcription factor; part of the gene cluster that mediates the biosynthesis of iso-A82775C, a enylepoxycyclohexane and biosynthetic precursor of the chloropestolide anticancer natural products. The sequence is that of Transcription factor iacI from Pestalotiopsis fici (strain W106-1 / CGMCC3.15140).